Reading from the N-terminus, the 165-residue chain is Phosphopantetheine adenylyltransferase (165 aa).

Thr-9 serves as a coordination point for substrate. ATP is bound by residues 9–10 and His-17; that span reads TF. The substrate site is built by Lys-41, Leu-73, and Arg-87. ATP-binding positions include 88–90, Glu-98, and 123–129; these read GLR and YQFISGT.

Belongs to the bacterial CoaD family. As to quaternary structure, homohexamer. The cofactor is Mg(2+).

It is found in the cytoplasm. The catalysed reaction is (R)-4'-phosphopantetheine + ATP + H(+) = 3'-dephospho-CoA + diphosphate. Its pathway is cofactor biosynthesis; coenzyme A biosynthesis; CoA from (R)-pantothenate: step 4/5. Reversibly transfers an adenylyl group from ATP to 4'-phosphopantetheine, yielding dephospho-CoA (dPCoA) and pyrophosphate. The polypeptide is Phosphopantetheine adenylyltransferase (Polynucleobacter necessarius subsp. necessarius (strain STIR1)).